The following is a 309-amino-acid chain: Golgi-associated RAB2 interactor protein 1A (309 aa).

Phosphoserine is present on residues serine 231, serine 263, and serine 267.

This sequence belongs to the GARIN family. In terms of assembly, interacts (via N-terminus) with RAB2B (in GTP-bound form).

It localises to the golgi apparatus. RAB2B effector protein required for accurate acrosome formation and normal male fertility. In Homo sapiens (Human), this protein is Golgi-associated RAB2 interactor protein 1A.